Consider the following 139-residue polypeptide: Small ribosomal subunit protein uS11 (139 aa).

The tract at residues 118–139 is disordered; sequence EDVTPIPHDGTRPKGGRRGRRV.

This sequence belongs to the universal ribosomal protein uS11 family. As to quaternary structure, part of the 30S ribosomal subunit.

In terms of biological role, located on the platform of the 30S subunit. The protein is Small ribosomal subunit protein uS11 of Thermococcus sibiricus (strain DSM 12597 / MM 739).